Reading from the N-terminus, the 138-residue chain is Large ribosomal subunit protein uL16 (138 aa).

Positions 1-19 are enriched in basic residues; it reads MLSPKRTKYRKAHKGRIHG. Residues 1 to 21 form a disordered region; sequence MLSPKRTKYRKAHKGRIHGNA.

This sequence belongs to the universal ribosomal protein uL16 family. Part of the 50S ribosomal subunit.

Binds 23S rRNA and is also seen to make contacts with the A and possibly P site tRNAs. This chain is Large ribosomal subunit protein uL16, found in Granulibacter bethesdensis (strain ATCC BAA-1260 / CGDNIH1).